Reading from the N-terminus, the 970-residue chain is MQGWHTTFLGMRGLPRDISDFEMKAFFTFDGAERDAINARRGDSHKLGLALHIGFLRMSGRLLGAFRVIPVALWRHLGNELGIAAPEVASLRAMYERGRTLFDHQQVACTVLGFQWMSEHQRRSLVRELRDEVAGCDRDQLLVRARQWLYKNKLVIVHERAIRTLIAAALAQLEVETGTAIAASVDPATLDRWRASVSELRPDGQTQQSWLWAAPAKHSTRQISEVLERIDLLYTLDVHKHLADIPDLILRRYARRLVSRPPSAGAKIKEPARTVEVACFLRYCLFTTTDQLILMVQRRIADLWRQAAADVPATVNWAAMYKTLLGELVALSAQGAVPDAELRARLEALITETQKRKPPSRASLVREGLIDGIRPVRSLLVAIAKLPWQATGEHPAIEYLAKLQALYLKGSRKLPVEVVAPSLGMIWQVSISSPDRERAFQALEVATLFALRRAVRNGSVWIEHSLSFRGRARLFFTDERWQAESKKHYARLSLPSKAATFLKPLLARVTAGVDAVAAAARSGVLRVDDELHLSPLPAEDEDPEVTKLRAALDHRIGEVQLPEVILAVDAQVRFSWIMLGREPRSTDELLMVYAGIMAHGTSLTAVECARMIPQLSATSIRQAMRWARDERRLSQACQAVLEFMQRHPIAATWGRSDLASSDMMSMETTKRVWQARLDPRRNTPSIGIYSHVKDRWGIFHAQPFVLNERQAGVAIEGVIRQEKLETSQLAVDTHGYTDFAMSHARLLGFDLCPRLKELKQRHLFVPRGTKVPAEIAAVCEANVDVALIEKHWDSLVHLAASVMSGHASAVAALARFGSAAQGDPIYEAGVQLGRLLRTAFLADYFVKDAFRNELRRVLNRGEAVNALKRAIYTGRISPAQAKRVDEMQAVADALSLMANIVMAWNTSQMQAVLDRWSNRRQVIPPELIGKIAPTRLESINLRGVFRFPVDRYADQILPSRPNASITGTNG.

It belongs to the transposase 7 family.

Functionally, required for transposition of transposon Tn5271. The chain is Transposase for insertion sequence element IS1071 in transposon Tn5271 from Comamonas testosteroni (Pseudomonas testosteroni).